An 822-amino-acid chain; its full sequence is ATP-dependent zinc metalloprotease FTSH 7, chloroplastic (822 aa).

Low complexity-rich tracts occupy residues 1–34 (MASASAAAETLAAASLPVASPSRSLLRPLPRRAS), 80–94 (AEASGPGEASSSSSG), and 101–122 (AAAAAEAGGDGASTSTTSAAAT). Disordered stretches follow at residues 1-44 (MASA…ASVR) and 67-136 (PAAR…ENKW). Residues 1 to 70 (MASASAAAET…RVLRRPPAAR (70 aa)) constitute a chloroplast transit peptide. 2 helical membrane-spanning segments follow: residues 154-174 (IVQGREMGFLLLQLGFAIFAL) and 288-308 (GGLLNSALVALIYVVLIAVVL). 386–393 (GLPGTGKT) provides a ligand contact to ATP. Residue His611 coordinates Zn(2+). The active site involves Glu612. His615 and Asp694 together coordinate Zn(2+).

It in the N-terminal section; belongs to the AAA ATPase family. This sequence in the C-terminal section; belongs to the peptidase M41 family. Requires Zn(2+) as cofactor.

Its subcellular location is the plastid. It localises to the chloroplast thylakoid membrane. Functionally, probable ATP-dependent zinc metallopeptidase. The polypeptide is ATP-dependent zinc metalloprotease FTSH 7, chloroplastic (FTSH7) (Oryza sativa subsp. japonica (Rice)).